The following is a 457-amino-acid chain: MESKNKLKRGLSTRHIRFMALGSAIGTGLFYGSADAIKMAGPSVLLAYIIGGIAAYIIMRALGEMSVHNPAASSFSRYAQENLGPLAGYITGWTYCFEILIVAIADVTAFGIYMGVWFPTVPHWIWVLSVVLIICAVNLMSVKVFGELEFWFSFFKVATIIIMIVAGFGIIIWGIGNGGQPTGIHNLWSNGGFFSNGWLGMVMSLQMVMFAYGGIEIIGITAGEAKDPEKSIPRAINSVPMRILVFYVGTLFVIMSIYPWNQVGTAGSPFVLTFQHMGITFAASILNFVVLTASLSAINSDVFGVGRMLHGMAEQGSAPKIFSKTSRRGIPWVTVLVMTTALLFAVYLNYIMPENVFLVIASLATFATVWVWIMILLSQIAFRRRLPPEEVKALKFKVPGGVATTIGGLIFLLFIIGLIGYHPDTRISLYVGFAWIVVLLIGWMFKRRHDRQLAENQ.

The Cytoplasmic segment spans residues 1–17 (MESKNKLKRGLSTRHIR). The next 2 helical transmembrane spans lie at 18-38 (FMAL…DAIK) and 39-59 (MAGP…YIIM). The Cytoplasmic segment spans residues 60-84 (RALGEMSVHNPAASSFSRYAQENLG). Residues 85–105 (PLAGYITGWTYCFEILIVAIA) form a helical membrane-spanning segment. At 106–113 (DVTAFGIY) the chain is on the periplasmic side. A helical membrane pass occupies residues 114–134 (MGVWFPTVPHWIWVLSVVLII). The Cytoplasmic portion of the chain corresponds to 135–156 (CAVNLMSVKVFGELEFWFSFFK). A helical membrane pass occupies residues 157–177 (VATIIIMIVAGFGIIIWGIGN). At 178-197 (GGQPTGIHNLWSNGGFFSNG) the chain is on the periplasmic side. Residues 198 to 218 (WLGMVMSLQMVMFAYGGIEII) form a helical membrane-spanning segment. The Cytoplasmic portion of the chain corresponds to 219 to 242 (GITAGEAKDPEKSIPRAINSVPMR). The chain crosses the membrane as a helical span at residues 243-263 (ILVFYVGTLFVIMSIYPWNQV). The Periplasmic portion of the chain corresponds to 264–277 (GTAGSPFVLTFQHM). The helical transmembrane segment at 278 to 298 (GITFAASILNFVVLTASLSAI) threads the bilayer. Residues 299 to 331 (NSDVFGVGRMLHGMAEQGSAPKIFSKTSRRGIP) are Cytoplasmic-facing. The chain crosses the membrane as a helical span at residues 332–352 (WVTVLVMTTALLFAVYLNYIM). Over 353 to 355 (PEN) the chain is Periplasmic. A helical membrane pass occupies residues 356–376 (VFLVIASLATFATVWVWIMIL). The Cytoplasmic segment spans residues 377-399 (LSQIAFRRRLPPEEVKALKFKVP). A helical transmembrane segment spans residues 400-420 (GGVATTIGGLIFLLFIIGLIG). Over 421-424 (YHPD) the chain is Periplasmic. A helical transmembrane segment spans residues 425–445 (TRISLYVGFAWIVVLLIGWMF). At 446 to 457 (KRRHDRQLAENQ) the chain is on the cytoplasmic side.

Belongs to the amino acid-polyamine-organocation (APC) superfamily. Amino acid transporter (AAT) (TC 2.A.3.1) family.

The protein resides in the cell inner membrane. Functionally, permease that is involved in the transport across the cytoplasmic membrane of proline. The sequence is that of Proline-specific permease ProY (proY) from Escherichia coli O157:H7.